Here is a 517-residue protein sequence, read N- to C-terminus: 2-isopropylmalate synthase (517 aa).

The Pyruvate carboxyltransferase domain maps to 7–269 (VIIFDTTLRD…ETGIDTTQIV (263 aa)). Mn(2+) contacts are provided by Asp-16, His-204, His-206, and Asn-240. The segment at 395 to 517 (KFISQKISTE…KPKAQGSGTI (123 aa)) is regulatory domain.

The protein belongs to the alpha-IPM synthase/homocitrate synthase family. LeuA type 1 subfamily. As to quaternary structure, homodimer. Requires Mn(2+) as cofactor.

It is found in the cytoplasm. It carries out the reaction 3-methyl-2-oxobutanoate + acetyl-CoA + H2O = (2S)-2-isopropylmalate + CoA + H(+). It functions in the pathway amino-acid biosynthesis; L-leucine biosynthesis; L-leucine from 3-methyl-2-oxobutanoate: step 1/4. Catalyzes the condensation of the acetyl group of acetyl-CoA with 3-methyl-2-oxobutanoate (2-ketoisovalerate) to form 3-carboxy-3-hydroxy-4-methylpentanoate (2-isopropylmalate). This Neisseria meningitidis serogroup A / serotype 4A (strain DSM 15465 / Z2491) protein is 2-isopropylmalate synthase.